We begin with the raw amino-acid sequence, 449 residues long: UDP-N-acetylmuramate--L-alanine ligase (449 aa).

Residue 121 to 127 coordinates ATP; that stretch reads GAHGKSS.

This sequence belongs to the MurCDEF family.

Its subcellular location is the cytoplasm. The enzyme catalyses UDP-N-acetyl-alpha-D-muramate + L-alanine + ATP = UDP-N-acetyl-alpha-D-muramoyl-L-alanine + ADP + phosphate + H(+). It functions in the pathway cell wall biogenesis; peptidoglycan biosynthesis. Cell wall formation. The chain is UDP-N-acetylmuramate--L-alanine ligase from Helicobacter pylori (strain ATCC 700392 / 26695) (Campylobacter pylori).